A 1097-amino-acid chain; its full sequence is RecBCD enzyme subunit RecC (1097 aa).

It belongs to the RecC family. As to quaternary structure, heterotrimer of RecB, RecC and RecD. All subunits contribute to DNA-binding.

A helicase/nuclease that prepares dsDNA breaks (DSB) for recombinational DNA repair. Binds to DSBs and unwinds DNA via a highly rapid and processive ATP-dependent bidirectional helicase activity. Holoenzyme degrades any linearized DNA that is unable to undergo homologous recombination. In the holoenzyme this subunit recognizes the wild-type Chi sequence, and when added to isolated RecB increases its ATP-dependent helicase processivity. Unlike the case in E.coli, suppresses RecA-dependent homologous recombination, is instead required for single-strand annealing pathway repair of DSB. The chain is RecBCD enzyme subunit RecC from Mycobacterium tuberculosis (strain ATCC 25618 / H37Rv).